A 686-amino-acid chain; its full sequence is Elongation factor G 2 (686 aa).

Residues 7-280 (TTVRNLGILA…AVVAYLPSPL (274 aa)) form the tr-type G domain. Residues 16–23 (AHVDAGKT), 80–84 (DTPGH), and 134–137 (NKMD) contribute to the GTP site.

This sequence belongs to the TRAFAC class translation factor GTPase superfamily. Classic translation factor GTPase family. EF-G/EF-2 subfamily.

The protein resides in the cytoplasm. Catalyzes the GTP-dependent ribosomal translocation step during translation elongation. During this step, the ribosome changes from the pre-translocational (PRE) to the post-translocational (POST) state as the newly formed A-site-bound peptidyl-tRNA and P-site-bound deacylated tRNA move to the P and E sites, respectively. Catalyzes the coordinated movement of the two tRNA molecules, the mRNA and conformational changes in the ribosome. The chain is Elongation factor G 2 (fusB) from Streptomyces coelicolor (strain ATCC BAA-471 / A3(2) / M145).